We begin with the raw amino-acid sequence, 675 residues long: Protein PALS1 (675 aa).

The disordered stretch occupies residues 1-78; the sequence is MTTSHMNGHV…RREEEGKKQE (78 aa). Residues 1–345 are required for the correct localization of PALS1 and PATJ at cell-cell contacts and the normal formation of tight junctions and adherens junctions; sequence MTTSHMNGHV…QQIKPPPAKE (345 aa). 2 stretches are compositionally biased toward basic and acidic residues: residues 10-36 and 54-78; these read VTEESDNEVKNVDLASPEEHQKHREMA and AQLERIRQQQEDMRRRREEEGKKQE. Residues S14 and S25 each carry the phosphoserine modification. The segment at 21–140 is interaction with PARD6B; the sequence is VDLASPEEHQ…LKHIQHTLVD (120 aa). Residues S83 and S84 each carry the phosphoserine modification. L27 domains are found at residues 120–177 and 179–235; these read KILE…NKAS and PFPL…MQLE. Positions 181 to 243 are interaction with LIN7C; that stretch reads PLISNAQDLA…LEPFTDERVY (63 aa). The PDZ domain occupies 256-336; sequence IVRIEKARDI…TLTFVLIPSQ (81 aa). Residues 345-417 form the SH3 domain; the sequence is ETVIHVKAHF…PGKSFQQQRE (73 aa). The 182-residue stretch at 479 to 660 folds into the Guanylate kinase-like domain; it reads KRPIILIGPQ…AYQELLRLIN (182 aa). An ATP-binding site is contributed by 486–493; the sequence is GPQNCGQN.

It belongs to the MAGUK family. Heterodimer with MPP1. Forms a heterotrimeric complex composed of PALS1, LIN7B and PATJ; the N-terminal L27 domain of PALS1 interacts with the L27 domain of PATJ and the C-terminal L27 domain of PALS1 interacts with the L27 domain of LIN7B. Component of a complex composed of PALS1, CRB1 and MPP4. Component of a complex whose core is composed of ARHGAP17, AMOT, PALS1, PATJ and PARD3/PAR3. Component of a complex composed of PALS1, CRB1 and EPB41L5. Within the complex, interacts (via HOOK domain) with EPB41L5 (via FERM domain), and interacts with CRB1 (via intracellular domain). Component of a complex composed of PALS1, MPP3 and CRB1; PALS1 acts as a bridging protein between MPP3 (via guanylate kinase-like domain) and CRB1. Component of a complex composed of CRB3, PALS1 and PATJ. As part of the Crumbs complex; interacts with WWP1, the interaction is enhanced by AMOTL2 and facilitates WWP1 localization to the plasma membrane. The Crumbs complex promotes monoubiquitination of AMOTL2 by WWP1, which activates the Hippo signaling pathway. Interacts (via PDZ domain) with PATJ (via N-terminus). Interacts with EZR. Interacts (via PDZ domain) with CRB1 (via C-terminal ERLI motif). While the PDZ domain is sufficient for interaction with CRB1, the adjacent SH3 and guanylate kinase-like domains are likely to contribute to a high affinity interaction. Interacts with WWTR1/TAZ (via WW domain). Interacts with MPP7. Interacts (via PDZ domain) with CRB3 (via C-terminus). Interacts with LIN7C. Interacts with MPDZ. Interacts with PARD6B. Interacts with SC6A1. Interacts with CDH5; the interaction promotes PALS1 localization to cell junctions and is required for CDH5-mediated vascular lumen formation and endothelial cell. Interacts with NPHP1 (via coiled coil and SH3 domains). Interacts with NPHP4. Interacts with CRB2.

The protein localises to the golgi apparatus. Its subcellular location is the cell membrane. It localises to the endomembrane system. The protein resides in the cell junction. It is found in the tight junction. The protein localises to the adherens junction. Its subcellular location is the cell projection. It localises to the axon. The protein resides in the perikaryon. It is found in the apical cell membrane. Plays a role in tight junction biogenesis and in the establishment of cell polarity in epithelial cells. Also involved in adherens junction biogenesis by ensuring correct localization of the exocyst complex protein EXOC4/SEC8 which allows trafficking of adherens junction structural component CDH1 to the cell surface. Plays a role through its interaction with CDH5 in vascular lumen formation and endothelial membrane polarity. Required during embryonic and postnatal retinal development. Required for the maintenance of cerebellar progenitor cells in an undifferentiated proliferative state, preventing premature differentiation, and is required for cerebellar histogenesis, fissure formation, cerebellar layer organization and cortical development. Plays a role in neuronal progenitor cell survival, potentially via promotion of mTOR signaling. Plays a role in the radial and longitudinal extension of the myelin sheath in Schwann cells. May modulate SC6A1/GAT1-mediated GABA uptake by stabilizing the transporter. May play a role in the T-cell receptor-mediated activation of NF-kappa-B. Required for localization of EZR to the apical membrane of parietal cells and may play a role in the dynamic remodeling of the apical cytoskeleton. Required for the normal polarized localization of the vesicular marker STX4. Required for the correct trafficking of the myelin proteins PMP22 and MAG. Involved in promoting phosphorylation and cytoplasmic retention of transcriptional coactivators YAP1 and WWTR1/TAZ which leads to suppression of TGFB1-dependent transcription of target genes such as CCN2/CTGF, SERPINE1/PAI1, SNAI1/SNAIL1 and SMAD7. In Canis lupus familiaris (Dog), this protein is Protein PALS1.